The following is a 194-amino-acid chain: uncharacterized protein (194 aa).

The HTH tetR-type domain occupies 2–62; sequence QGPRERMVVS…CEAVDYAGEH (61 aa). The H-T-H motif DNA-binding region spans 25 to 44; it reads AISDVLQHSGAPRGSAYHYF.

This is an uncharacterized protein from Mycobacterium tuberculosis (strain CDC 1551 / Oshkosh).